A 186-amino-acid chain; its full sequence is Ribosome rescue factor SmrB (186 aa).

Residues 99 to 174 (IDLHGLTQHQ…SDAAIIVIIE (76 aa)) form the Smr domain.

Belongs to the SmrB family. As to quaternary structure, associates with collided ribosomes, but not with correctly translating polysomes.

In terms of biological role, acts as a ribosome collision sensor. Detects stalled/collided disomes (pairs of ribosomes where the leading ribosome is stalled and a second ribosome has collided with it) and endonucleolytically cleaves mRNA at the 5' boundary of the stalled ribosome. Stalled/collided disomes form a new interface (primarily via the 30S subunits) that binds SmrB. Cleaved mRNA becomes available for tmRNA ligation, leading to ribosomal subunit dissociation and rescue of stalled ribosomes. The sequence is that of Ribosome rescue factor SmrB from Buchnera aphidicola subsp. Acyrthosiphon pisum (strain Tuc7).